The sequence spans 1551 residues: Dual oxidase 1 (1551 aa).

An N-terminal signal peptide occupies residues 1–21 (MGFCLALTWTFLVGSWTSMGA). Residues 22–596 (QKPISWEVQR…YFEGSGFGFG (575 aa)) are Extracellular-facing. The peroxidase-like; mediates peroxidase activity stretch occupies residues 26-593 (SWEVQRFDGW…MQDYFEGSGF (568 aa)). A glycan (N-linked (GlcNAc...) asparagine) is linked at Asn-94. Residues 197–222 (LASGPDPAFPRNAQPPLLMWSAPDPA) form a disordered region. Residues Asn-342, Asn-354, Asn-461, and Asn-534 are each glycosylated (N-linked (GlcNAc...) asparagine). A helical membrane pass occupies residues 597 to 617 (VTIGTLCCFPLVSLLSAWIVA). Topologically, residues 618–1044 (RLRKKNFKKL…KRFIENYRRH (427 aa)) are cytoplasmic. EF-hand domains are found at residues 815–850 (PQDM…FMKG), 851–886 (SPEE…FIEI), and 895–930 (QLTE…HDSE). Ca(2+)-binding residues include Asp-828, Asp-830, Asn-832, Tyr-834, Glu-839, Asp-864, Asp-866, Asn-868, and Glu-875. The interaction with TXNDC11 stretch occupies residues 956–1248 (YISQEKICPS…GSFGLIQLPR (293 aa)). The helical transmembrane segment at 1045 to 1065 (IGCVAVFYAITGGLFLERAYY) threads the bilayer. At 1066 to 1080 (YAFGAHHMGITDTTR) the chain is on the extracellular side. The helical transmembrane segment at 1081–1101 (VGIILSRGTAASISFMFSYIL) threads the bilayer. A Ferric oxidoreductase domain is found at 1087–1269 (RGTAASISFM…YVGDKLVSLS (183 aa)). Over 1102-1151 (LTMCRNLITFLRETFLNRYVPFDAAVDFHRLIASTAIVLTVLHSAGHVVN) the chain is Cytoplasmic. A helical membrane pass occupies residues 1152-1172 (VYLFSISPLSVLSCLFPGLFH). Topologically, residues 1173-1188 (NDGSEFPQKYYWWFFQ) are extracellular. A helical membrane pass occupies residues 1189-1209 (TVPGLTGVMLLLVLAIMYVFA). Residues 1210–1226 (SHHFRRHSFRGFWLTHH) are Cytoplasmic-facing. The helical transmembrane segment at 1227–1247 (LYILLYVLLIIHGSFGLIQLP) threads the bilayer. Residue Arg-1248 is a topological domain, extracellular. Residues 1249 to 1269 (FHIFFLVPALIYVGDKLVSLS) form a helical membrane-spanning segment. An FAD-binding FR-type domain is found at 1270 to 1376 (RKKVEISVVK…DGPFGEGHQE (107 aa)). The Cytoplasmic portion of the chain corresponds to 1270-1551 (RKKVEISVVK…THFSHHYENF (282 aa)).

It in the N-terminal section; belongs to the peroxidase family. As to quaternary structure, interacts with TPO and CYBA. Interacts with TXNDC11. In terms of processing, N-glycosylated. As to expression, expressed in thyrocytes (at protein level). Specifically expressed in thyroid.

The protein localises to the apical cell membrane. It carries out the reaction NADH + O2 + H(+) = H2O2 + NAD(+). The enzyme catalyses NADPH + O2 + H(+) = H2O2 + NADP(+). It participates in hormone biosynthesis; thyroid hormone biosynthesis. Its activity is regulated as follows. Peroxidase activity is inhibited by aminobenzohydrazide. The NADPH oxidase activity is calcium-dependent. Its function is as follows. Generates hydrogen peroxide which is required for the activity of thyroid peroxidase/TPO and lactoperoxidase/LPO. Plays a role in thyroid hormones synthesis and lactoperoxidase-mediated antimicrobial defense at the surface of mucosa. May have its own peroxidase activity through its N-terminal peroxidase-like domain. In Canis lupus familiaris (Dog), this protein is Dual oxidase 1 (DUOX1).